The primary structure comprises 146 residues: Large ribosomal subunit protein uL15 (146 aa).

Residues 1–53 (MILSNLKPVPGARHSKKRLGRGPGSGTGKTSGKGHKGQKARSGGGVRPGFEGG) are disordered. Composition is skewed to gly residues over residues 21 to 31 (RGPGSGTGKTS) and 42 to 52 (SGGGVRPGFEG).

Belongs to the universal ribosomal protein uL15 family. Part of the 50S ribosomal subunit.

Its function is as follows. Binds to the 23S rRNA. The chain is Large ribosomal subunit protein uL15 from Acholeplasma laidlawii (strain PG-8A).